The primary structure comprises 475 residues: Gamma-aminobutyric acid receptor subunit gamma-2 (475 aa).

A signal peptide spans Met1–Arg39. Residues Lys41–Phe275 are Extracellular-facing. N-linked (GlcNAc...) asparagine glycosylation is found at Asn52 and Asn129. Cys190 and Cys204 are joined by a disulfide. A glycan (N-linked (GlcNAc...) asparagine) is linked at Asn247. The helical transmembrane segment at Thr276–Ile296 threads the bilayer. The Cytoplasmic segment spans residues Asn297 to Pro302. A helical membrane pass occupies residues Ala303–Ala322. Residues Arg323–Ala334 are Extracellular-facing. Residues Met335–Phe359 traverse the membrane as a helical segment. Topologically, residues Val360–Ser451 are cytoplasmic. Ser382 bears the Phosphoserine; by PKC mark. The chain crosses the membrane as a helical span at residues Tyr452–Tyr472. The Extracellular portion of the chain corresponds to Leu473–Leu475.

This sequence belongs to the ligand-gated ion channel (TC 1.A.9) family. Gamma-aminobutyric acid receptor (TC 1.A.9.5) subfamily. GABRG2 sub-subfamily. Heteropentamer, formed by a combination of alpha (GABRA1-6), beta (GABRB1-3), gamma (GABRG1-3), delta (GABRD), epsilon (GABRE), rho (GABRR1-3), pi (GABRP) and theta (GABRQ) chains, each subunit exhibiting distinct physiological and pharmacological properties. Interacts with GABARAP. Interacts with KIF21B. Identified in a complex of 720 kDa composed of LHFPL4, NLGN2, GABRA1, GABRB2, GABRG2 and GABRB3. Interacts with LHFPL4. Interacts with SHISA7; interaction leads to the regulation of GABA(A) receptor trafficking, channel deactivation kinetics and pharmacology. Post-translationally, palmitoylated by ZDHHC3/GODZ; required for the accumulation of GABA(A) receptors at the postsynaptic membrane of inhibitory GABAergic synapses. Glycosylated.

The protein resides in the postsynaptic cell membrane. Its subcellular location is the cell membrane. The protein localises to the cell projection. It localises to the dendrite. It is found in the cytoplasmic vesicle membrane. The enzyme catalyses chloride(in) = chloride(out). Its activity is regulated as follows. Allosterically activated by benzodiazepines. Activated by pentobarbital. Inhibited by the antagonist bicuculline. Inhibited by zinc ions. Potentiated by histamine. Functionally, gamma subunit of the heteropentameric ligand-gated chloride channel gated by gamma-aminobutyric acid (GABA), a major inhibitory neurotransmitter in the brain. GABA-gated chloride channels, also named GABA(A) receptors (GABAAR), consist of five subunits arranged around a central pore and contain GABA active binding site(s) located at the alpha and beta subunit interface(s). When activated by GABA, GABAARs selectively allow the flow of chloride anions across the cell membrane down their electrochemical gradient. Gamma-2/GABRG2-containing GABAARs are found at both synaptic and extrasynaptic sites. Chloride influx into the postsynaptic neuron following GABAAR opening decreases the neuron ability to generate a new action potential, thereby reducing nerve transmission. GABAARs containing alpha-1 and beta-2 or -3 subunits exhibit synaptogenic activity; the gamma-2 subunit being necessary but not sufficient to induce rapid synaptic contacts formation. Extrasynaptic gamma-2-containing receptors contribute to the tonic GABAergic inhibition. GABAARs function also as histamine receptor where histamine binds at the interface of two neighboring beta subunits and potentiates GABA response in a gamma-2 subunit-controlled manner. The polypeptide is Gamma-aminobutyric acid receptor subunit gamma-2 (GABRG2) (Bos taurus (Bovine)).